A 571-amino-acid chain; its full sequence is Proline--tRNA ligase (571 aa).

The protein belongs to the class-II aminoacyl-tRNA synthetase family. ProS type 1 subfamily. In terms of assembly, homodimer.

The protein resides in the cytoplasm. It catalyses the reaction tRNA(Pro) + L-proline + ATP = L-prolyl-tRNA(Pro) + AMP + diphosphate. Functionally, catalyzes the attachment of proline to tRNA(Pro) in a two-step reaction: proline is first activated by ATP to form Pro-AMP and then transferred to the acceptor end of tRNA(Pro). As ProRS can inadvertently accommodate and process non-cognate amino acids such as alanine and cysteine, to avoid such errors it has two additional distinct editing activities against alanine. One activity is designated as 'pretransfer' editing and involves the tRNA(Pro)-independent hydrolysis of activated Ala-AMP. The other activity is designated 'posttransfer' editing and involves deacylation of mischarged Ala-tRNA(Pro). The misacylated Cys-tRNA(Pro) is not edited by ProRS. The polypeptide is Proline--tRNA ligase (Stutzerimonas stutzeri (strain A1501) (Pseudomonas stutzeri)).